Reading from the N-terminus, the 194-residue chain is uncharacterized protein (194 aa).

Residues 77–92 are compositionally biased toward polar residues; it reads QTQPQHQTLSQHLPQT. Positions 77–96 are disordered; the sequence is QTQPQHQTLSQHLPQTHHTD. The helical transmembrane segment at 169 to 189 threads the bilayer; that stretch reads FWEILLLIILIAVLVYGIYWL.

The protein resides in the host membrane. The protein localises to the virion. This is an uncharacterized protein from Acanthamoeba polyphaga (Amoeba).